A 332-amino-acid polypeptide reads, in one-letter code: Anthranilate phosphoribosyltransferase (332 aa).

Residues G79, 82–83 (GD), T87, 89–92 (NIST), 107–115 (KHGNRSVSS), and S119 each bind 5-phospho-alpha-D-ribose 1-diphosphate. G79 contributes to the anthranilate binding site. S91 is a Mg(2+) binding site. N110 contributes to the anthranilate binding site. Residue R165 participates in anthranilate binding. Residues D223 and E224 each contribute to the Mg(2+) site.

It belongs to the anthranilate phosphoribosyltransferase family. As to quaternary structure, homodimer. Requires Mg(2+) as cofactor.

It carries out the reaction N-(5-phospho-beta-D-ribosyl)anthranilate + diphosphate = 5-phospho-alpha-D-ribose 1-diphosphate + anthranilate. Its pathway is amino-acid biosynthesis; L-tryptophan biosynthesis; L-tryptophan from chorismate: step 2/5. Functionally, catalyzes the transfer of the phosphoribosyl group of 5-phosphorylribose-1-pyrophosphate (PRPP) to anthranilate to yield N-(5'-phosphoribosyl)-anthranilate (PRA). This Vibrio vulnificus (strain YJ016) protein is Anthranilate phosphoribosyltransferase.